Consider the following 85-residue polypeptide: Beta-insect depressant toxin Lqh-dprIT3f (85 aa).

The N-terminal stretch at 1-21 (MKLLLLLTISASMLIEGLVNA) is a signal peptide. An LCN-type CS-alpha/beta domain is found at 22–82 (DGYIRGGDGC…EWDYETDTCG (61 aa)). Intrachain disulfides connect cysteine 31-cysteine 81, cysteine 35-cysteine 56, cysteine 42-cysteine 63, and cysteine 46-cysteine 65. A Glycine amide modification is found at glycine 82.

This sequence belongs to the long (4 C-C) scorpion toxin superfamily. Sodium channel inhibitor family. Beta subfamily. As to expression, expressed by the venom gland.

Its subcellular location is the secreted. Functionally, depressant insect beta-toxins cause a transient contraction paralysis followed by a slow flaccid paralysis. They bind voltage-independently at site-4 of sodium channels (Nav) and block action potentials, primarily by depolarizing the axonal membrane and suppressing the sodium current. This depressant toxin is active only on insects. It is found in a relatively small amount in the venom. This chain is Beta-insect depressant toxin Lqh-dprIT3f, found in Leiurus hebraeus (Hebrew deathstalker scorpion).